We begin with the raw amino-acid sequence, 352 residues long: Cyclin-dependent kinase-like 1 (352 aa).

Positions 4–287 (YEKIGKIGEG…CEQLLQHPYF (284 aa)) constitute a Protein kinase domain. ATP is bound by residues 10 to 18 (IGEGSYGVV) and K33. The [NKR]KIAxRE motif lies at 45–51 (KKIALRE). D126 acts as the Proton acceptor in catalysis.

Belongs to the protein kinase superfamily. CMGC Ser/Thr protein kinase family. CDC2/CDKX subfamily.

The protein resides in the cytoplasm. It localises to the nucleus. It catalyses the reaction L-seryl-[protein] + ATP = O-phospho-L-seryl-[protein] + ADP + H(+). It carries out the reaction L-threonyl-[protein] + ATP = O-phospho-L-threonyl-[protein] + ADP + H(+). The sequence is that of Cyclin-dependent kinase-like 1 from Mus musculus (Mouse).